The primary structure comprises 425 residues: Ribosomal protein uS12 methylthiotransferase RimO (425 aa).

An MTTase N-terminal domain is found at 2 to 115 (KNFTVITLGC…IIDYIKQFSK (114 aa)). [4Fe-4S] cluster-binding residues include C11, C47, C78, C142, C146, and C149. The 230-residue stretch at 128 to 357 (VEPPSYRYIK…MARQAVISLE (230 aa)) folds into the Radical SAM core domain. The region spanning 360–425 (RALIGKKYEA…YEYDVKGVIV (66 aa)) is the TRAM domain.

It belongs to the methylthiotransferase family. RimO subfamily. It depends on [4Fe-4S] cluster as a cofactor.

Its subcellular location is the cytoplasm. The enzyme catalyses L-aspartate(89)-[ribosomal protein uS12]-hydrogen + (sulfur carrier)-SH + AH2 + 2 S-adenosyl-L-methionine = 3-methylsulfanyl-L-aspartate(89)-[ribosomal protein uS12]-hydrogen + (sulfur carrier)-H + 5'-deoxyadenosine + L-methionine + A + S-adenosyl-L-homocysteine + 2 H(+). Catalyzes the methylthiolation of an aspartic acid residue of ribosomal protein uS12. The protein is Ribosomal protein uS12 methylthiotransferase RimO of Thermodesulfovibrio yellowstonii (strain ATCC 51303 / DSM 11347 / YP87).